The primary structure comprises 387 residues: Sialic acid-binding Ig-like lectin 13 (387 aa).

The signal sequence occupies residues 1-15 (MLPLLLPLLWAGALA). The Ig-like V-type domain maps to 16 to 138 (LEGIFQLEVP…KDPPLSVHVT (123 aa)). At 16-341 (LEGIFQLEVP…QRKSGPMAEV (326 aa)) the chain is on the extracellular side. 3 disulfide bridges follow: C35-C168, C40-C100, and C162-C211. N99 carries an N-linked (GlcNAc...) asparagine glycan. Position 118 (R118) interacts with N-acetylneuraminate. The region spanning 144–227 (PDILIPGALK…AGVTTTRTVR (84 aa)) is the Ig-like C2-type 1 domain. N-linked (GlcNAc...) asparagine glycans are attached at residues N229, N236, and N254. In terms of domain architecture, Ig-like C2-type 2 spans 234–326 (PQNLTLTVFQ…RNPLGSQQVS (93 aa)). A disulfide bond links C270 and C314. The helical transmembrane segment at 342–362 (VLVAIGEAAVKILLLFLCLII) threads the bilayer. Residues 363–387 (LRVKSHRRKAAKAATGVEAAKVVKG) lie on the Cytoplasmic side of the membrane.

The protein belongs to the immunoglobulin superfamily. SIGLEC (sialic acid binding Ig-like lectin) family.

It is found in the membrane. In terms of biological role, putative adhesion molecule that mediates sialic-acid dependent binding to cells. This Pan troglodytes (Chimpanzee) protein is Sialic acid-binding Ig-like lectin 13 (SIGLEC13).